The following is a 374-amino-acid chain: Phospho-N-acetylmuramoyl-pentapeptide-transferase (374 aa).

10 helical membrane passes run Ala3–Ile23, Met52–Leu72, Pro85–Ile105, Leu125–Thr145, Ile170–Ala190, Leu201–Phe221, Pro244–Trp264, Ile271–Ser291, Thr294–Ile314, and Phe350–Leu370.

It belongs to the glycosyltransferase 4 family. MraY subfamily. Mg(2+) is required as a cofactor.

The protein localises to the cell membrane. It catalyses the reaction UDP-N-acetyl-alpha-D-muramoyl-L-alanyl-gamma-D-glutamyl-meso-2,6-diaminopimeloyl-D-alanyl-D-alanine + di-trans,octa-cis-undecaprenyl phosphate = di-trans,octa-cis-undecaprenyl diphospho-N-acetyl-alpha-D-muramoyl-L-alanyl-D-glutamyl-meso-2,6-diaminopimeloyl-D-alanyl-D-alanine + UMP. It functions in the pathway cell wall biogenesis; peptidoglycan biosynthesis. In terms of biological role, catalyzes the initial step of the lipid cycle reactions in the biosynthesis of the cell wall peptidoglycan: transfers peptidoglycan precursor phospho-MurNAc-pentapeptide from UDP-MurNAc-pentapeptide onto the lipid carrier undecaprenyl phosphate, yielding undecaprenyl-pyrophosphoryl-MurNAc-pentapeptide, known as lipid I. This Salinispora arenicola (strain CNS-205) protein is Phospho-N-acetylmuramoyl-pentapeptide-transferase.